Here is a 361-residue protein sequence, read N- to C-terminus: Phenylalanine--tRNA ligase alpha subunit (361 aa).

Glu260 contributes to the Mg(2+) binding site.

It belongs to the class-II aminoacyl-tRNA synthetase family. Phe-tRNA synthetase alpha subunit type 1 subfamily. As to quaternary structure, tetramer of two alpha and two beta subunits. Mg(2+) is required as a cofactor.

It localises to the cytoplasm. The enzyme catalyses tRNA(Phe) + L-phenylalanine + ATP = L-phenylalanyl-tRNA(Phe) + AMP + diphosphate + H(+). This Bartonella bacilliformis (strain ATCC 35685 / KC583 / Herrer 020/F12,63) protein is Phenylalanine--tRNA ligase alpha subunit.